The chain runs to 246 residues: Myelin protein P0 (246 aa).

An N-terminal signal peptide occupies residues 1-27; that stretch reads MFRDLKPAYLFCCSVLYAFSVLRPSQG. Residues 28 to 143 enclose the Ig-like V-type domain; that stretch reads ISVSTHHNLH…VGTSSDVHLT (116 aa). Residues 28 to 150 lie on the Extracellular side of the membrane; the sequence is ISVSTHHNLH…HLTVYDKIPP (123 aa). The cysteines at positions 48 and 125 are disulfide-linked. A glycan (N-linked (GlcNAc...) (complex) asparagine) is linked at Asn-120. The chain crosses the membrane as a helical span at residues 151–178; it reads VGAGVVSGAIIGTFLGIILLIVGGLYLF. The Cytoplasmic portion of the chain corresponds to 179-246; sequence RYIVRRRARS…KLSESKRDKK (68 aa). The interval 200–246 is disordered; the sequence is AERGKVSGKAGTVSKGPVLYATLDQSKSGKGASEKKSKLSESKRDKK. Residues 231-246 are compositionally biased toward basic and acidic residues; sequence ASEKKSKLSESKRDKK.

The protein belongs to the myelin P0 protein family. Post-translationally, N-glycan is sulfated. Found only in peripheral nervous system Schwann cells.

It localises to the cell membrane. Its function is as follows. Creation of an extracellular membrane face which guides the wrapping process and ultimately compacts adjacent lamellae. This is Myelin protein P0 (mpz) from Heterodontus francisci (Horn shark).